Reading from the N-terminus, the 362-residue chain is MRDETPEQPAPLRFGYTTGSCATATSLAAARLLLGGRADDAVEIVLPKGQRVMMRLEFCRTTAAGAEAGTIKDAGDDPDVTHGALVFARVALSAAPGVRFHAGPGVGTVTRAGLTLPIGEPAINPVPRQMMTTHLDALAAEHGYTGGFDVTIGVEGGEALALKTMNPRLGIVGGLSILGTTGIVRPFSCAAYIASIHQGIDVARANGIAHIAACTGNASEDAMRAHYGLPDIALIEMGDFAGAVLKHLRRAPLARVSMCGGFGKLSKLAAGHLDLHSRHSSIDLPLLAQWAADAGASDALQAAMRAANTSQEALKLALADGVPLGDIVCAHALRVARDIVPASVAVEMFAIDRQGRFVGSAR.

Belongs to the CbiD family.

The enzyme catalyses Co-precorrin-5B + S-adenosyl-L-methionine = Co-precorrin-6A + S-adenosyl-L-homocysteine. The protein operates within cofactor biosynthesis; adenosylcobalamin biosynthesis; cob(II)yrinate a,c-diamide from sirohydrochlorin (anaerobic route): step 6/10. In terms of biological role, catalyzes the methylation of C-1 in cobalt-precorrin-5B to form cobalt-precorrin-6A. This chain is Cobalt-precorrin-5B C(1)-methyltransferase, found in Burkholderia vietnamiensis (strain G4 / LMG 22486) (Burkholderia cepacia (strain R1808)).